A 140-amino-acid polypeptide reads, in one-letter code: Ctenidin-1 (140 aa).

Residues 1–19 form the signal peptide; that stretch reads MKHLIPLIVMASVVLAVYA. At Gly138 the chain carries Glycine amide.

Belongs to the glycine-rich peptide family. In terms of tissue distribution, expressed in hemocytes (at protein level).

The protein localises to the secreted. Antimicrobial protein with bacteriostatic activity against the Gram-negative bacterium E.coli, and very weak activity against the Gram-positive bacterium S.aureus. Lacks activity against the yeast C.albicans. The protein is Ctenidin-1 of Cupiennius salei (American wandering spider).